Consider the following 216-residue polypeptide: MTYAYLFKYIIIGDTGVGKSCLLLQFTDKRFQPVHDLTIGVEFGARMVNIDGKQIKLQIWDTAGQESFRSITRSYYRGAAGALLVYDITRRETFNHLTSWLEDARQHSSSNMVIMLIGNKSDLESRRDVKREEGEAFAREHGLIFMETSAKTACNVEEAFINTAKEIYRKIQQGLFDVHNEANGIKIGPQQSISTSVGPSASQRNSRDIGSNSGCC.

The GDP site is built by Gly16, Val17, Gly18, Lys19, Ser20, and Cys21. 7 residues coordinate GTP: Gly16, Val17, Gly18, Lys19, Ser20, Cys21, and Thr38. Ser20 lines the Mg(2+) pocket. A Switch 1 motif is present at residues 37 to 42 (LTIGVE). Positions 38 and 61 each coordinate Mg(2+). The Switch 2 signature appears at 63 to 72 (AGQESFRSIT). 6 residues coordinate GTP: Gly64, Asn119, Lys120, Asp122, Ala150, and Lys151. Asn119 contacts GDP. Residues Asp122, Ala150, and Lys151 each contribute to the GDP site. The segment at 189 to 216 (PQQSISTSVGPSASQRNSRDIGSNSGCC) is disordered. Position 202 is a phosphoserine (Ser202). 2 S-geranylgeranyl cysteine lipidation sites follow: Cys215 and Cys216.

It belongs to the small GTPase superfamily. Rab family. Interacts (in GTP-bound form) with GARIN4 (via N-terminus). Interacts (in GTP-bound form) with GARIN5A. Interacts (in GTP-bound form) with GARIN1B. Interacts with VPS39 and VPS41. Mg(2+) serves as cofactor. As to expression, expressed in kidney, prostate, lung, liver, thymus, colon, pancreas, and skeletal muscle, and low levels in placenta. Not detected in heart, brain, spleen, testis, ovary, small intestine and leukocyte.

Its subcellular location is the cell membrane. The protein localises to the endoplasmic reticulum membrane. It is found in the golgi apparatus membrane. The protein resides in the cytoplasmic vesicle. It localises to the secretory vesicle. Its subcellular location is the acrosome. The protein localises to the autophagosome membrane. It catalyses the reaction GTP + H2O = GDP + phosphate + H(+). Regulated by guanine nucleotide exchange factors (GEFs) which promote the exchange of bound GDP for free GTP, GTPase activating proteins (GAPs) which increase the GTP hydrolysis activity, and GDP dissociation inhibitors (GDIs) which inhibit the dissociation of the nucleotide from the GTPase. The small GTPases Rab are key regulators of intracellular membrane trafficking, from the formation of transport vesicles to their fusion with membranes. Rabs cycle between active GTP-bound and inactive GDP-bound states. In their active state, drive transport of vesicular carriers from donor organelles to acceptor organelles to regulate the membrane traffic that maintains organelle identity and morphology. Regulates the compacted morphology of the Golgi. Promotes cytosolic DNA-induced innate immune responses. Regulates IFN responses against DNA viruses by regulating the CGAS-STING signaling axis. Together with RAB2A redundantly required for efficient autophagic flux. The chain is Ras-related protein Rab-2B from Homo sapiens (Human).